The primary structure comprises 388 residues: Salivary protein Tsal2A (388 aa).

An N-terminal signal peptide occupies residues 1–18 (MSLLYGLLILAFTRSCLV). N-linked (GlcNAc...) asparagine glycosylation occurs at Asn260.

It belongs to the DNA/RNA non-specific endonuclease family. A divalent metal cation is required as a cofactor. As to expression, saliva (at protein level).

The protein resides in the secreted. Binds double-stranded DNA (dsDNA) with high affinity. Binds double-stranded RNA. Binds single-stranded DNA with lower affinity and with a preference for purine-rich sequences. Shows residual nuclease activity for dsDNA. Facilitates blood meal intake by lowering the local viscosity created by the release of host DNA. This chain is Salivary protein Tsal2A, found in Glossina morsitans morsitans (Savannah tsetse fly).